A 160-amino-acid polypeptide reads, in one-letter code: MKKIILTLSLGLLTACSAQIQKAEQNDMKLAPPTDVRSGYIRLVKNVNYYIDSESIWVDNQEPQIVHFDAVVNLDKGLYVYPEPKRYARSVRQYKILNCANYHLTQVRTDFYDEFWGQGLRAAPKKQKKHTLSLTPDTTLYNAAQIICANYGKAFSVDKK.

The signal sequence occupies residues 1–15; the sequence is MKKIILTLSLGLLTA. Residue C16 is the site of N-palmitoyl cysteine attachment. C16 carries the S-diacylglycerol cysteine lipid modification. An interaction with laminin and plasminogen region spans residues 41–68; sequence IRLVKNVNYYIDSESIWVDNQEPQIVHF. Residues 84–108 form an interaction with vitronectin and epithelial cells region; it reads PKRYARSVRQYKILNCANYHLTQVR.

Homodimer. Interacts with host vitronectin, laminin and plasminogen. Can interact with both immobilized and soluble vitronectin.

Its subcellular location is the cell outer membrane. It is found in the cell surface. Acts as a multifunctional adhesin involved in direct interactions with host epithelial cells and host proteins, including vitronectin, laminin and plasminogen. In addition, interaction with serum vitronectin plays an important role in bacterial serum resistance, and conversion of plasminogen to plasmin at the cell surface aids in immune evasion and contributes to bacterial virulence. Induces a pro-inflammatory epithelial cell response, leading to interleukin-8 (IL-8) secretion and up-regulation of ICAM1. The protein is Surface-adhesin protein E (pe) of Haemophilus influenzae (strain NTHi 3655).